Reading from the N-terminus, the 158-residue chain is Complexin-3 (158 aa).

Residues 14–47 (KNLTGSLGGGEDKGDGDKSAAEAQGMSREEYEEY) form a disordered region. A compositionally biased stretch (basic and acidic residues) spans 23–33 (GEDKGDGDKSA). A coiled-coil region spans residues 39-74 (MSREEYEEYQKQLVEEKMERDAQFTQRKAERATLRS). The residue at position 155 (Cys155) is a Cysteine methyl ester. Cys155 is lipidated: S-farnesyl cysteine. Residues 156-158 (HIM) constitute a propeptide, removed in mature form.

The protein belongs to the complexin/synaphin family. As to quaternary structure, binds to the SNARE core complex containing SNAP25, VAMP2 and STX1A. Farnesylation mediates presynaptic targeting. As to expression, present in many brain regions, including hippocampus and cerebellum (at protein level). Expressed in the retina (at protein level). Expressed in retinal amacrine cells (at protein level). Expressed in retinal photoreceptor ribbon synapses. Expressed in the retinal inner nuclear layer, at bipolar cells (at protein level). Expressed in cone photoreceptor synaptic terminals (at protein level).

The protein localises to the synapse. It localises to the cell membrane. Functionally, complexin that regulates SNARE protein complex-mediated synaptic vesicle fusion. Required for the maintenance of synaptic ultrastructure in the adult retina. Positively regulates synaptic transmission through synaptic vesicle availability and exocytosis of neurotransmitters at photoreceptor ribbon synapses in the retina. Suppresses tonic photoreceptor activity and baseline 'noise' by suppression of Ca(2+) vesicle tonic release and the facilitation of evoked synchronous and asynchronous Ca(2+) vesicle release. The chain is Complexin-3 (Cplx3) from Mus musculus (Mouse).